The sequence spans 503 residues: Probable cytosol aminopeptidase (503 aa).

Lys270 and Asp275 together coordinate Mn(2+). Lys282 is an active-site residue. Mn(2+)-binding residues include Asp293, Asp352, and Glu354. The active site involves Arg356.

It belongs to the peptidase M17 family. The cofactor is Mn(2+).

It localises to the cytoplasm. It catalyses the reaction Release of an N-terminal amino acid, Xaa-|-Yaa-, in which Xaa is preferably Leu, but may be other amino acids including Pro although not Arg or Lys, and Yaa may be Pro. Amino acid amides and methyl esters are also readily hydrolyzed, but rates on arylamides are exceedingly low.. The enzyme catalyses Release of an N-terminal amino acid, preferentially leucine, but not glutamic or aspartic acids.. Presumably involved in the processing and regular turnover of intracellular proteins. Catalyzes the removal of unsubstituted N-terminal amino acids from various peptides. This chain is Probable cytosol aminopeptidase, found in Escherichia coli O139:H28 (strain E24377A / ETEC).